Here is a 1165-residue protein sequence, read N- to C-terminus: ATP-dependent helicase/deoxyribonuclease subunit B (1165 aa).

The UvrD-like helicase ATP-binding domain occupies Met1–Glu324. Gly6–Ser13 lines the ATP pocket. A UvrD-like helicase C-terminal domain is found at Pro282–His597. Positions 803, 1121, 1124, and 1130 each coordinate [4Fe-4S] cluster.

This sequence belongs to the helicase family. AddB/RexB type 1 subfamily. Heterodimer of AddA and AddB. The cofactor is Mg(2+). Requires [4Fe-4S] cluster as cofactor.

In terms of biological role, the heterodimer acts as both an ATP-dependent DNA helicase and an ATP-dependent, dual-direction single-stranded exonuclease. Recognizes the chi site generating a DNA molecule suitable for the initiation of homologous recombination. The AddB subunit has 5' -&gt; 3' nuclease activity but not helicase activity. The protein is ATP-dependent helicase/deoxyribonuclease subunit B of Symbiobacterium thermophilum (strain DSM 24528 / JCM 14929 / IAM 14863 / T).